The sequence spans 183 residues: Troponin I, fast skeletal muscle (183 aa).

An N-acetylserine modification is found at S2. The involved in binding TNC stretch occupies residues 2-48; the sequence is SDEEKKRRAATARRQHLKSAMLQLAVTEIEKEAAAKEVEKQNYLAEH. The involved in binding TNC and actin stretch occupies residues 97-117; the sequence is SQKLFDLRGKFKRPPLRRVRM.

It belongs to the troponin I family. As to quaternary structure, binds to actin and tropomyosin. The N-terminus is blocked.

In terms of biological role, troponin I is the inhibitory subunit of troponin, the thin filament regulatory complex which confers calcium-sensitivity to striated muscle actomyosin ATPase activity. This Gallus gallus (Chicken) protein is Troponin I, fast skeletal muscle (TNNI2).